Reading from the N-terminus, the 117-residue chain is Protein TCL1B2 (117 aa).

The protein belongs to the TCL1 family.

This Mus musculus (Mouse) protein is Protein TCL1B2 (Tcl1b2).